We begin with the raw amino-acid sequence, 671 residues long: Beta-galactosidase 1 (671 aa).

The N-terminal stretch at 1-18 (MKLIVLIFFLLFINLNYC) is a signal peptide. E200 serves as the catalytic Proton donor. N228 carries an N-linked (GlcNAc...) asparagine glycan. E288 functions as the Nucleophile in the catalytic mechanism. N-linked (GlcNAc...) asparagine glycans are attached at residues N321, N391, N400, N499, N509, N564, and N595.

Belongs to the glycosyl hydrolase 35 family.

The protein resides in the lysosome. It carries out the reaction Hydrolysis of terminal non-reducing beta-D-galactose residues in beta-D-galactosides.. Functionally, cleaves beta-linked terminal galactosyl residues from gangliosides, glycoproteins, and glycosaminoglycans. The polypeptide is Beta-galactosidase 1 (glb1) (Dictyostelium discoideum (Social amoeba)).